An 85-amino-acid polypeptide reads, in one-letter code: Large ribosomal subunit protein bL27 (85 aa).

The segment at 1-22 (MAHKKGASSTRNGRDSNAQRLG) is disordered. The span at 7–19 (ASSTRNGRDSNAQ) shows a compositional bias: polar residues.

Belongs to the bacterial ribosomal protein bL27 family.

In Leifsonia xyli subsp. xyli (strain CTCB07), this protein is Large ribosomal subunit protein bL27.